Consider the following 39-residue polypeptide: Photosystem II reaction center protein L (39 aa).

The helical transmembrane segment at 18–38 threads the bilayer; the sequence is SLYLGLLLVAVLGILFSSYFF.

This sequence belongs to the PsbL family. As to quaternary structure, PSII is composed of 1 copy each of membrane proteins PsbA, PsbB, PsbC, PsbD, PsbE, PsbF, PsbH, PsbI, PsbJ, PsbK, PsbL, PsbM, PsbT, PsbX, PsbY, PsbZ, Psb30/Ycf12, peripheral proteins PsbO, CyanoQ (PsbQ), PsbU, PsbV and a large number of cofactors. It forms dimeric complexes.

It is found in the cellular thylakoid membrane. In terms of biological role, one of the components of the core complex of photosystem II (PSII). PSII is a light-driven water:plastoquinone oxidoreductase that uses light energy to abstract electrons from H(2)O, generating O(2) and a proton gradient subsequently used for ATP formation. It consists of a core antenna complex that captures photons, and an electron transfer chain that converts photonic excitation into a charge separation. This subunit is found at the monomer-monomer interface and is required for correct PSII assembly and/or dimerization. In Microcystis aeruginosa (strain NIES-843 / IAM M-2473), this protein is Photosystem II reaction center protein L.